The chain runs to 300 residues: MENYVPFLVSHWRTVGLISVSIAAGVALGQLNQTHERAANKSQRVHTNSSIKAKQVKRESAIEQINEIEDDDEQSLEDQDVLPILFQYEKPSEADSIRRSEEFYRRMNQRRSVREISSDPVALEVIENIIKTGGTSPSGAHTEPWTFVVVSNLEMKQQIRQIIEAEEEINYKQRMGDVWVQDLQPVGTTWVKEYLTEAPWLILIFKQVHGFKRNGQKKIHYYNEISVSIATGFLLAAIQEAGLVTVTTTPLNCGPSIRVLLGRPVNEKLLLLLPVGYPKVGATVPDFKRKPLHDIMVHYQ.

A helical membrane pass occupies residues 15–31 (VGLISVSIAAGVALGQL). FMN is bound by residues 110–114 (RRSVR), S138, and 138–139 (SG). 3,5-diiodo-L-tyrosine-binding residues include A140, E167, Y171, and K192. 3-iodo-L-tyrosine contacts are provided by A140, E167, Y171, and K192. FMN is bound by residues 247–249 (TTT) and R289.

This sequence belongs to the nitroreductase family. FMN serves as cofactor. In terms of processing, may be cleaved at Gln-55. The cleaved form retains catalytic activity.

The protein localises to the membrane. It carries out the reaction 2 iodide + L-tyrosine + 2 NADP(+) = 3,5-diiodo-L-tyrosine + 2 NADPH + H(+). The catalysed reaction is iodide + L-tyrosine + NADP(+) = 3-iodo-L-tyrosine + NADPH. It catalyses the reaction 3-iodo-L-tyrosine + iodide + NADP(+) = 3,5-diiodo-L-tyrosine + NADPH + H(+). The enzyme catalyses L-tyrosine + chloride + NADP(+) = 3-chloro-L-tyrosine + NADPH. It carries out the reaction bromide + L-tyrosine + NADP(+) = 3-bromo-L-tyrosine + NADPH. Catalyzes the dehalogenation of halotyrosines such as 3,5-diiodo-L-tyrosine. Likely to also catalyze the dehalogenation of other halotyrosines such as 3-bromo-L-tyrosine, 3-chloro-L-tyrosine and 3-iodo-L-tyrosine. The chain is Iodotyrosine deiodinase from Daphnia pulex (Water flea).